A 394-amino-acid chain; its full sequence is NAD(P)H-quinone oxidoreductase subunit H (394 aa).

Belongs to the complex I 49 kDa subunit family. NDH-1 can be composed of about 15 different subunits; different subcomplexes with different compositions have been identified which probably have different functions.

It is found in the cellular thylakoid membrane. It carries out the reaction a plastoquinone + NADH + (n+1) H(+)(in) = a plastoquinol + NAD(+) + n H(+)(out). The catalysed reaction is a plastoquinone + NADPH + (n+1) H(+)(in) = a plastoquinol + NADP(+) + n H(+)(out). Its function is as follows. NDH-1 shuttles electrons from an unknown electron donor, via FMN and iron-sulfur (Fe-S) centers, to quinones in the respiratory and/or the photosynthetic chain. The immediate electron acceptor for the enzyme in this species is believed to be plastoquinone. Couples the redox reaction to proton translocation, and thus conserves the redox energy in a proton gradient. Cyanobacterial NDH-1 also plays a role in inorganic carbon-concentration. The protein is NAD(P)H-quinone oxidoreductase subunit H of Nostoc punctiforme (strain ATCC 29133 / PCC 73102).